The chain runs to 253 residues: NAC transcription factor 32 (253 aa).

Residues 10-160 (FPPGFRFHPT…DWVLCRIYNK (151 aa)) form the NAC domain. The DNA-binding element occupies 106 to 166 (VGIKKALVFY…IYNKKGVIEK (61 aa)).

As to expression, expressed in germinating seeds, roots, leaf veins, open flowers and silique stalks.

It localises to the nucleus. Its function is as follows. Transcriptional activator that positively regulates age-dependent senescence, dark-induced leaf senescence and stress-induced senescence. Regulates leaf senescence through the modulation of the expression of senescence-associated genes SGR1/NYE1, SAG113 and SAUR36/SAG201, which are involved in chlorophyll degradation, and abscisic acid (ABA) and auxin promotion of senescence, respectively. Promotes reactive oxygen species (ROS) production during age-dependent and stress-induced senescence. Positively regulates auxin-mediated responses in roots. Stress-responsive NAC transcription factor involved in ABA-inducible leaf senescence signaling. Required for normal seed development and morphology. The chain is NAC transcription factor 32 from Arabidopsis thaliana (Mouse-ear cress).